Consider the following 103-residue polypeptide: uncharacterized protein (103 aa).

The helical transmembrane segment at 33–57 (GYVAAIVAGPVSMSPLDWICPLLAI) threads the bilayer.

The protein resides in the membrane. This is an uncharacterized protein from Sinorhizobium fredii (strain NBRC 101917 / NGR234).